A 463-amino-acid polypeptide reads, in one-letter code: Female germline-specific tumor suppressor gld-1 (463 aa).

Residues 1 to 10 (MPSCTTPTYG) show a composition bias toward polar residues. The interval 1-76 (MPSCTTPTYG…RAPPPARLTL (76 aa)) is disordered. Residues 11–31 (VSTQLESQSSESPSRSSVMTP) are compositionally biased toward low complexity. The qua1 domain; involved in homodimerization stretch occupies residues 135 to 205 (PTATEPIEVE…PEPAGDMISI (71 aa)). The KH domain occupies 208–260 (KIYVPKNEYPDYNFVGRILGPRGMTAKQLEQDTGCKIMVRGKGSMRDKSKESA). The segment at 305–336 (APEGTDELKRKQLMELAIINGTYRPMKSPNPA) is qua2 domain; involved in RNA binding. The segment at 443–463 (NTNVSPSGASPSASSVNNTSF) is disordered. Over residues 447–457 (SPSGASPSASS) the composition is skewed to low complexity.

Homodimer. Post-translationally, phosphorylated by cdk-2 which may negatively regulate its expression in distal mitotic germline cells. Undergoes proteasomal degradation in proximal oocytes following mating. In terms of tissue distribution, expressed in proximal and distal oocytes in female worms but is eliminated from proximal oocytes following mating.

Its function is as follows. RNA-binding protein which recognizes the 5'-UACUCAU-3' RNA consensus sequence. Binds sequences in both the 5'coding and the 3'-UTR region of rme-2 mRNA. Binds sequences in the 3'-UTR region of cye-1 mRNA. Binds to cyb-2.1, cyb-2.2 and cyb-3 mRNA. Binds sequences in the 3'-UTR region of tra-2 mRNA. Binds to the 3' UTR of Notch receptor homolog glp-1, thereby repressing glp-1 translation in the embryo. Binding to the glp-1 3' UTR is inhibited by pos-1 binding to an overlapping binding site in the glp-1 3' UTR. Germ line-specific tumor suppressor essential for oogenesis. Controls the spatial pattern of translation of multiple oogenesis specific mRNAs (e.g. yolk receptor rme-2) by repression of translation during early meiotic prophase (leptotene to pachytene) and then derepression of translation during diplotene/ diakinesis, following its degradation. Also functions to promote the male sexual fate in the hermaphrodite germline but not the male germline. Represses translation of the vacuolar ATPase component vha-13 in the distal gonad. Functions redundantly with gld-2 to promote the initiation of meiotic development and/or inhibit stem cell proliferation. By regulating cye-1 expression, prevents entry into mitosis in meiotic germline cells. The sequence is that of Female germline-specific tumor suppressor gld-1 (gld-1) from Caenorhabditis elegans.